The primary structure comprises 143 residues: Large ribosomal subunit protein uL11 (143 aa).

This sequence belongs to the universal ribosomal protein uL11 family. As to quaternary structure, part of the ribosomal stalk of the 50S ribosomal subunit. Interacts with L10 and the large rRNA to form the base of the stalk. L10 forms an elongated spine to which L12 dimers bind in a sequential fashion forming a multimeric L10(L12)X complex. In terms of processing, one or more lysine residues are methylated.

In terms of biological role, forms part of the ribosomal stalk which helps the ribosome interact with GTP-bound translation factors. The polypeptide is Large ribosomal subunit protein uL11 (Beutenbergia cavernae (strain ATCC BAA-8 / DSM 12333 / CCUG 43141 / JCM 11478 / NBRC 16432 / NCIMB 13614 / HKI 0122)).